A 361-amino-acid chain; its full sequence is Phosphoserine aminotransferase (361 aa).

L-glutamate is bound by residues Ser-9 and Arg-42. Residues 76–77, Trp-102, Thr-153, Asp-173, and Gln-196 each bind pyridoxal 5'-phosphate; that span reads GR. An N6-(pyridoxal phosphate)lysine modification is found at Lys-197. 238-239 is a binding site for pyridoxal 5'-phosphate; that stretch reads NT.

This sequence belongs to the class-V pyridoxal-phosphate-dependent aminotransferase family. SerC subfamily. As to quaternary structure, homodimer. Requires pyridoxal 5'-phosphate as cofactor.

It is found in the cytoplasm. The catalysed reaction is O-phospho-L-serine + 2-oxoglutarate = 3-phosphooxypyruvate + L-glutamate. It catalyses the reaction 4-(phosphooxy)-L-threonine + 2-oxoglutarate = (R)-3-hydroxy-2-oxo-4-phosphooxybutanoate + L-glutamate. It participates in amino-acid biosynthesis; L-serine biosynthesis; L-serine from 3-phospho-D-glycerate: step 2/3. The protein operates within cofactor biosynthesis; pyridoxine 5'-phosphate biosynthesis; pyridoxine 5'-phosphate from D-erythrose 4-phosphate: step 3/5. In terms of biological role, catalyzes the reversible conversion of 3-phosphohydroxypyruvate to phosphoserine and of 3-hydroxy-2-oxo-4-phosphonooxybutanoate to phosphohydroxythreonine. The chain is Phosphoserine aminotransferase from Cronobacter sakazakii (strain ATCC BAA-894) (Enterobacter sakazakii).